The chain runs to 562 residues: Potassium-transporting ATPase potassium-binding subunit (562 aa).

12 helical membrane passes run 6-26 (FLLI…LGGF), 62-82 (YALA…VLLM), 132-152 (GLTV…FALI), 175-195 (LYVL…QGVL), 253-273 (FVQM…FGQV), 283-303 (LIWA…YAEL), 327-347 (FGIL…CGAV), 356-376 (ALGG…FGGV), 379-399 (GLYG…LMIG), 416-436 (MTAL…ALAL), 483-503 (LLLA…VLAI), and 524-544 (GLLF…LTFI).

Belongs to the KdpA family. In terms of assembly, the system is composed of three essential subunits: KdpA, KdpB and KdpC.

The protein localises to the cell inner membrane. Functionally, part of the high-affinity ATP-driven potassium transport (or Kdp) system, which catalyzes the hydrolysis of ATP coupled with the electrogenic transport of potassium into the cytoplasm. This subunit binds the periplasmic potassium ions and delivers the ions to the membrane domain of KdpB through an intramembrane tunnel. In Yersinia pestis bv. Antiqua (strain Antiqua), this protein is Potassium-transporting ATPase potassium-binding subunit.